A 781-amino-acid chain; its full sequence is Catenin beta-1 (781 aa).

N-acetylalanine is present on A2. The segment at 2–23 is interaction with VCL; the sequence is ATQADLMELDMAMEPDRKAAVS. S23 carries the phosphoserine; by GSK3-beta; alternate modification. S23 is a glycosylation site (O-linked (GlcNAc) serine; alternate). Position 29 is a phosphoserine; by GSK3-beta (S29). Phosphoserine; by GSK3-beta and HIPK2 occurs at positions 33 and 37. The tract at residues 34-57 is disordered; it reads GIHSGATTTAPSLSGKGNPEEEDV. A Phosphothreonine; by GSK3-beta modification is found at T41. S45 bears the Phosphoserine mark. K49 carries the N6-acetyllysine modification. At Y64 the chain carries Phosphotyrosine; by PTK6. Y142 bears the Phosphotyrosine; by FYN and PTK6 mark. ARM repeat units follow at residues 151–191, 193–234, 235–276, 277–318, 319–360, 361–389, 400–441, 442–484, 489–530, 531–571, 594–636, and 637–666; these read RAIP…IMRS, QMVS…IFKS, GGIP…VRLA, GGLQ…ILAS, GGPQ…IVEA, GGMQ…RNLS, GLLG…VCQV, GGIE…AQNA, YGLP…LREQ, GAIP…EIVE, NTIP…AEGA, and TAPL…SEDK. Residues 156-178 are interaction with BCL9; it reads LTKLLNDEDQVVVNKAAVMVHQL. S191 carries the phosphoserine modification. At S246 the chain carries Phosphoserine; by CDK5. Phosphotyrosine is present on residues Y331 and Y333. S552 is subject to Phosphoserine; by AMPK. The residue at position 556 (T556) is a Phosphothreonine. At C619 the chain carries S-nitrosocysteine. S675 bears the Phosphoserine mark. The tract at residues 720-781 is disordered; the sequence is HSGGYGQDAL…NQLAWFDTDL (62 aa). The span at 734 to 745 shows a compositional bias: basic and acidic residues; that stretch reads MMEHEMGGHHPG. An interaction with SCRIB region spans residues 772–781; that stretch reads NQLAWFDTDL.

It belongs to the beta-catenin family. Two separate complex-associated pools are found in the cytoplasm. The majority is present as component of an E-cadherin/ catenin adhesion complex composed of at least E-cadherin/CDH1 and beta-catenin/CTNNB1, and possibly alpha-catenin/CTNNA1; the complex is located to adherens junctions. The stable association of CTNNA1 is controversial as CTNNA1 was shown not to bind to F-actin when assembled in the complex. Alternatively, the CTNNA1-containing complex may be linked to F-actin by other proteins such as LIMA1. Binds NHERF1. Interacts with PTPRU (via the cytoplasmic juxtamembrane domain) and with EMD. Interacts with SESTD1 and TRPC4. Interacts with CAV1. Interacts with PTPRJ. Interacts with PKT7. Interacts with FAT1 (via the cytoplasmic domain). Interacts with CDK2, NDRG2 and NANOS1. Interacts with NEK2 and CDK5. Interacts with CARM1, CXADR, PCDH11Y and PTK6. Interacts with RAPGEF2. Interacts with SOX7; this interaction may lead to proteasomal degradation of active CTNNB1 and thus inhibition of Wnt/beta-catenin-stimulated transcription. Identified in a complex with HINT1 and MITF. Interacts with FHIT. Interacts with FERMT2. Identified in a complex with TCF4 and FERMT2. Another cytoplasmic pool is part of a large complex containing AXIN1, AXIN2, APC, CSNK1A1 and GSK3B that promotes phosphorylation on N-terminal Ser and Thr residues and ubiquitination of CTNNB1 via BTRC and its subsequent degradation by the proteasome. Wnt-dependent activation of DVL antagonizes the action of GSK3B. When GSK3B activity is inhibited the complex dissociates, CTNNB1 is dephosphorylated and is no longer targeted for destruction. The stabilized protein translocates to the nucleus, where it binds TCF/LEF-1 family members, BCL9, BCL9L and possibly also RUVBL1 and CHD8. Interacts with TAX1BP3 (via the PDZ domain); this interaction inhibits the transcriptional activity of CTNNB1. Interacts with AJAP1, BAIAP1 and CTNNA3. Interacts with TRPV4; the TRPV4 and CTNNB1 complex can interact with CDH1. Interacts with VCL. The CTNNB1 and TCF4 complex interacts with PML. Interacts with XIRP1. Binds CTNNBIP and EP300. CTNNB1 forms a ternary complex with LEF1 and EP300 that is disrupted by CTNNBIP1 binding. Interacts directly with AXIN1; the interaction is regulated by CDK2 phosphorylation of AXIN1. Interacts with GLIS2. Interacts with SCRIB. Interacts with TNIK and TCF7L2. Interacts with SLC30A9. Interacts with RORA. May interact with P-cadherin/CDH3. Interacts with RNF220. Interacts with CTNND2. Interacts (via the C-terminal region) with CBY1. The complex composed, at least, of APC, CTNNB1 and GSK3B interacts with JPT1; the interaction requires the inactive form of GSK3B (phosphorylated at 'Ser-9'). Interacts with DLG5. Interacts with FAM53B; promoting translocation to the nucleus. Interacts with TMEM170B. Interacts with AHI1. Interacts with GID8. Component of an cadherin:catenin adhesion complex composed of at least of CDH26, beta-catenin/CTNNB1, alpha-catenin/CTNNA1 and p120 catenin/CTNND1. Forms a complex comprising APPL1, RUVBL2, APPL2, HDAC1 and HDAC2. Interacts with IRF2BPL; mediates the ubiquitination and degradation of CTNNB1. Interacts with AMFR. Interacts with LMBR1L. Interacts with SOX30; prevents interaction of CTNNB1 with TCF7L2/TCF4 and leads to inhibition of Wnt signaling. Interacts with SOX9; inhibiting CTNNB1 activity by competing with the binding sites of TCF/LEF within CTNNB1, thereby inhibiting the Wnt signaling. Interacts with SPN/CD43 cytoplasmic tail. Interacts (when phosphorylated at Tyr-333) with isoform M2 of PKM (PKM2); promoting transcription activation. Interacts with PKP2 (via HEAD domain). Interacts with CDH1. Interacts (when unphosphorylated) with FLYWCH1, perhaps preventing interaction of CTNNB1 with TCF4, and thereby regulating transcription activation; phosphorylation of CTNNB1 may inhibit the interaction. Interacts (via the central armadillo domains) with probable transcriptional regulator ADNP (via N-terminal region); interaction is direct and stabilizes CTNNB1 by modulating its phosphorylation by glycogen synthase kinase-3 beta GSK3B. Interacts with NR5A2. Interacts with DSG2; the interaction promotes localization of CTNNB1 at cell junctions thus reducing its nuclear localization and subsequent transcription of CTNNB1/TCF-target genes. In terms of processing, phosphorylation at Ser-552 by AMPK promotes stabilization of the protein, enhancing TCF/LEF-mediated transcription. Phosphorylation by GSK3B requires prior phosphorylation of Ser-45 by another kinase. Phosphorylation proceeds then from Thr-41 to Ser-37 and Ser-33. Phosphorylated by NEK2. EGF stimulates tyrosine phosphorylation. Phosphorylated on Ser-33 and Ser-37 by HIPK2 and GSK3B, this phosphorylation triggers proteasomal degradation. Phosphorylation on Ser-191 and Ser-246 by CDK5. Phosphorylation by CDK2 regulates insulin internalization. Phosphorylation by PTK6 at Tyr-64, Tyr-142, Tyr-331 and/or Tyr-333 with the predominant site at Tyr-64 is not essential for inhibition of transcriptional activity. Phosphorylation by SRC at Tyr-333 promotes interaction with isoform M2 of PKM (PKM2); promoting transcription activation. Ubiquitinated by the SCF(BTRC) E3 ligase complex when phosphorylated by GSK3B, leading to its degradation. Ubiquitinated by a E3 ubiquitin ligase complex containing UBE2D1, SIAH1, CACYBP/SIP, SKP1, APC and TBL1X, leading to its subsequent proteasomal degradation. Ubiquitinated and degraded following interaction with SOX9. Ubiquitinated via 'Lys-11'- and 'Lys-29'-linked ubiquitin chains by UBR5, leading to its stabilization. Post-translationally, S-nitrosylation at Cys-619 within adherens junctions promotes VEGF-induced, NO-dependent endothelial cell permeability by disrupting interaction with E-cadherin, thus mediating disassembly adherens junctions. In terms of processing, O-glycosylation at Ser-23 decreases nuclear localization and transcriptional activity, and increases localization to the plasma membrane and interaction with E-cadherin CDH1. Deacetylated at Lys-49 by SIRT1. In terms of tissue distribution, expressed in cerebellar granule neurons (at protein level). Expressed in the intestinal epithelium (at protein level). Abundantly expressed in the tooth, skin, lung, kidney, eye and brain with weak expression in the liver and heart.

Its subcellular location is the cytoplasm. It localises to the nucleus. It is found in the cytoskeleton. The protein resides in the cell junction. The protein localises to the adherens junction. Its subcellular location is the cell membrane. It localises to the microtubule organizing center. It is found in the centrosome. The protein resides in the spindle pole. The protein localises to the synapse. Its subcellular location is the cilium basal body. In terms of biological role, key downstream component of the canonical Wnt signaling pathway. In the absence of Wnt, forms a complex with AXIN1, AXIN2, APC, CSNK1A1 and GSK3B that promotes phosphorylation on N-terminal Ser and Thr residues and ubiquitination of CTNNB1 via BTRC and its subsequent degradation by the proteasome. In the presence of Wnt ligand, CTNNB1 is not ubiquitinated and accumulates in the nucleus, where it acts as a coactivator for transcription factors of the TCF/LEF family, leading to activate Wnt responsive genes. Also acts as a coactivator for other transcription factors, such as NR5A2. Promotes epithelial to mesenchymal transition/mesenchymal to epithelial transition (EMT/MET) via driving transcription of CTNNB1/TCF-target genes. Involved in the regulation of cell adhesion, as component of an E-cadherin:catenin adhesion complex. Acts as a negative regulator of centrosome cohesion. Involved in the CDK2/PTPN6/CTNNB1/CEACAM1 pathway of insulin internalization. Blocks anoikis of malignant kidney and intestinal epithelial cells and promotes their anchorage-independent growth by down-regulating DAPK2. Disrupts PML function and PML-NB formation by inhibiting RANBP2-mediated sumoylation of PML. Promotes neurogenesis by maintaining sympathetic neuroblasts within the cell cycle. Involved in chondrocyte differentiation via interaction with SOX9: SOX9-binding competes with the binding sites of TCF/LEF within CTNNB1, thereby inhibiting the Wnt signaling. Acts as a positive regulator of odontoblast differentiation during mesenchymal tooth germ formation, via promoting the transcription of differentiation factors such as LEF1, BMP2 and BMP4. Activity is repressed in a MSX1-mediated manner at the bell stage of mesenchymal tooth germ formation which prevents premature differentiation of odontoblasts. The sequence is that of Catenin beta-1 from Mus musculus (Mouse).